Here is a 417-residue protein sequence, read N- to C-terminus: Serine hydroxymethyltransferase (417 aa).

(6S)-5,6,7,8-tetrahydrofolate contacts are provided by residues Leu120 and 124 to 126 (GHL). Residue Lys229 is modified to N6-(pyridoxal phosphate)lysine. 354 to 356 (SPF) serves as a coordination point for (6S)-5,6,7,8-tetrahydrofolate.

It belongs to the SHMT family. Homodimer. Pyridoxal 5'-phosphate serves as cofactor.

The protein localises to the cytoplasm. The catalysed reaction is (6R)-5,10-methylene-5,6,7,8-tetrahydrofolate + glycine + H2O = (6S)-5,6,7,8-tetrahydrofolate + L-serine. The protein operates within one-carbon metabolism; tetrahydrofolate interconversion. It functions in the pathway amino-acid biosynthesis; glycine biosynthesis; glycine from L-serine: step 1/1. Its function is as follows. Catalyzes the reversible interconversion of serine and glycine with tetrahydrofolate (THF) serving as the one-carbon carrier. This reaction serves as the major source of one-carbon groups required for the biosynthesis of purines, thymidylate, methionine, and other important biomolecules. Also exhibits THF-independent aldolase activity toward beta-hydroxyamino acids, producing glycine and aldehydes, via a retro-aldol mechanism. The polypeptide is Serine hydroxymethyltransferase (Acinetobacter radioresistens).